The primary structure comprises 280 residues: Fructose-1,6-bisphosphatase class 1 (280 aa).

The Mg(2+) site is built by Glu64, Asp83, Leu85, and Asp86. Substrate contacts are provided by residues 86–89, Tyr189, and Lys220; that span reads DGSS. Position 226 (Glu226) interacts with Mg(2+).

It belongs to the FBPase class 1 family. As to quaternary structure, homotetramer. It depends on Mg(2+) as a cofactor.

The protein localises to the cytoplasm. The enzyme catalyses beta-D-fructose 1,6-bisphosphate + H2O = beta-D-fructose 6-phosphate + phosphate. It participates in carbohydrate biosynthesis; gluconeogenesis. In Campylobacter jejuni subsp. doylei (strain ATCC BAA-1458 / RM4099 / 269.97), this protein is Fructose-1,6-bisphosphatase class 1.